A 396-amino-acid chain; its full sequence is Ornithine aminotransferase (396 aa).

At Lys-255 the chain carries N6-(pyridoxal phosphate)lysine.

It belongs to the class-III pyridoxal-phosphate-dependent aminotransferase family. OAT subfamily. Pyridoxal 5'-phosphate is required as a cofactor.

It localises to the cytoplasm. It carries out the reaction a 2-oxocarboxylate + L-ornithine = L-glutamate 5-semialdehyde + an L-alpha-amino acid. It participates in amino-acid biosynthesis; L-proline biosynthesis; L-glutamate 5-semialdehyde from L-ornithine: step 1/1. Catalyzes the interconversion of ornithine to glutamate semialdehyde. In Staphylococcus epidermidis (strain ATCC 35984 / DSM 28319 / BCRC 17069 / CCUG 31568 / BM 3577 / RP62A), this protein is Ornithine aminotransferase.